The following is a 263-amino-acid chain: H-2 class II histocompatibility antigen, A-S beta chain (263 aa).

Residues 1 to 27 (MALQIPSLLLSAAVVVLMVLSSPGTEG) form the signal peptide. Residues 28 to 120 (GDSERHFVFQ…VETHTSLRRL (93 aa)) are beta-1. The Extracellular portion of the chain corresponds to 28–224 (GDSERHFVFQ…RAQSESARSK (197 aa)). 2 disulfide bridges follow: Cys42–Cys104 and Cys143–Cys199. The N-linked (GlcNAc...) asparagine glycan is linked to Asn46. Residues 121 to 214 (EQPNVVISLS…SLKSPITVEW (94 aa)) are beta-2. The Ig-like C1-type domain maps to 123 to 211 (PNVVISLSRT…EHPSLKSPIT (89 aa)). The tract at residues 215-224 (RAQSESARSK) is connecting peptide. Residues 225-245 (MLSGIGGCVLGVIFLGLGLFI) form a helical membrane-spanning segment. Residues 246-263 (RHRSQKGPRGPPPAGLLQ) are Cytoplasmic-facing.

The protein belongs to the MHC class II family. In terms of processing, ubiquitinated in immature dendritic cells leading to down-regulation of MHC class II.

It localises to the membrane. The sequence is that of H-2 class II histocompatibility antigen, A-S beta chain (H2-Ab1) from Mus musculus (Mouse).